Consider the following 461-residue polypeptide: Alpha-L-fucosidase (461 aa).

The signal sequence occupies residues 1-18 (MKMIIIFFILLILNLIKS).

Belongs to the glycosyl hydrolase 29 family.

It carries out the reaction an alpha-L-fucoside + H2O = L-fucose + an alcohol. In terms of biological role, alpha-L-fucosidase is responsible for hydrolyzing the alpha-1,6-linked fucose joined to the reducing-end N-acetylglucosamine of the carbohydrate moieties of glycoproteins. This chain is Alpha-L-fucosidase (alfA), found in Dictyostelium discoideum (Social amoeba).